Consider the following 293-residue polypeptide: MMRIALFLLTNLAVMVVFGLVLSLTGIQSSSVQGLMIMALLFGFGGSFVSLLMSKWMALRSVGGEVIEQPRNERERWLVNTVATQACQAGIAMPQVAIYHAPDINAFATGARRDASLVAVSTGLLQNMSPDEAEAVIAHEISHIANGDMVTMTLIQGVVNTFVIFISRILAQLAAGFMGGNRDEGEESNGNPLIYFAVATVLELVFGILASIITMWFSRHREFHADAGSAKLVGREKMIAALQRLKTSYEPQEATSMMAFCINGKSKSLSELFMTHPPLDKRIEALRTGEYLK.

2 consecutive transmembrane segments (helical) span residues 4-24 (IALF…VLSL) and 34-54 (GLMI…LLMS). Residue His-139 coordinates Zn(2+). Glu-140 is an active-site residue. Position 143 (His-143) interacts with Zn(2+). A run of 2 helical transmembrane segments spans residues 158-178 (VVNT…AGFM) and 193-213 (LIYF…ASII). Glu-222 lines the Zn(2+) pocket.

Belongs to the peptidase M48B family. Zn(2+) is required as a cofactor.

The protein localises to the cell inner membrane. The polypeptide is Protease HtpX (Escherichia coli O127:H6 (strain E2348/69 / EPEC)).